Reading from the N-terminus, the 668-residue chain is Endoplasmic reticulum oxidoreductin-1 (668 aa).

A signal peptide spans methionine 1–cysteine 22. Cystine bridges form between cysteine 79-cysteine 413, cysteine 89-cysteine 94, cysteine 150-cysteine 352, and cysteine 416-cysteine 419. A disordered region spans residues lysine 116–leucine 142. 5 residues coordinate FAD: arginine 186, threonine 188, tryptophan 199, serine 282, and histidine 285. Asparagine 298 and asparagine 307 each carry an N-linked (GlcNAc...) asparagine glycan. Arginine 314 provides a ligand contact to FAD. A glycan (N-linked (GlcNAc...) asparagine) is linked at asparagine 406. Cysteine 416 serves as the catalytic Nucleophile. Cysteine 419 is a catalytic residue. N-linked (GlcNAc...) asparagine glycosylation is present at asparagine 443. Disordered regions lie at residues valine 488–lysine 519 and glycine 554–phenylalanine 597. The segment covering glycine 494 to serine 509 has biased composition (polar residues). Residues aspartate 570–phenylalanine 581 are compositionally biased toward acidic residues.

The protein belongs to the EROs family. As to quaternary structure, may function both as a monomer and a homodimer. FAD serves as cofactor.

Its subcellular location is the endoplasmic reticulum membrane. Functionally, essential oxidoreductase that oxidizes proteins in the endoplasmic reticulum to produce disulfide bonds. Acts by oxidizing directly pdi1 isomerase through a direct disulfide exchange. Does not act as a direct oxidant of folding substrate, but relies on pdi1 to transfer oxidizing equivalent. Does not oxidize all pdi related proteins, suggesting that it can discriminate between pdi1 and related proteins. Its reoxidation probably involves electron transfer to molecular oxygen via FAD. Acts independently of glutathione. May be responsible for a significant proportion of reactive oxygen species (ROS) in the cell, thereby being a source of oxidative stress. This is Endoplasmic reticulum oxidoreductin-1 (ero-1) from Neurospora crassa (strain ATCC 24698 / 74-OR23-1A / CBS 708.71 / DSM 1257 / FGSC 987).